A 171-amino-acid chain; its full sequence is Minor capsid protein 3 (171 aa).

In terms of assembly, interacts with the major capsid protein.

Its subcellular location is the virion. In terms of biological role, one of the minor capsid proteins that constitute a network internal to the major capsid proteins and outside the lipid membrane. The minor capsid proteins glue and stabilize the capsomers. The chain is Minor capsid protein 3 from Chlorella (PBCV-1).